The primary structure comprises 439 residues: Ribosomal protein uS12 methylthiotransferase RimO (439 aa).

The region spanning 2-114 (SKLYLMSLGC…IDEMILKKTN (113 aa)) is the MTTase N-terminal domain. Cysteine 11, cysteine 45, cysteine 77, cysteine 146, cysteine 150, and cysteine 153 together coordinate [4Fe-4S] cluster. One can recognise a Radical SAM core domain in the interval 132–363 (TGSNSHAFIK…VDEVIEKSFE (232 aa)).

The protein belongs to the methylthiotransferase family. RimO subfamily. Requires [4Fe-4S] cluster as cofactor.

Its subcellular location is the cytoplasm. The enzyme catalyses L-aspartate(89)-[ribosomal protein uS12]-hydrogen + (sulfur carrier)-SH + AH2 + 2 S-adenosyl-L-methionine = 3-methylsulfanyl-L-aspartate(89)-[ribosomal protein uS12]-hydrogen + (sulfur carrier)-H + 5'-deoxyadenosine + L-methionine + A + S-adenosyl-L-homocysteine + 2 H(+). Its function is as follows. Catalyzes the methylthiolation of an aspartic acid residue of ribosomal protein uS12. This chain is Ribosomal protein uS12 methylthiotransferase RimO, found in Campylobacter jejuni subsp. jejuni serotype O:23/36 (strain 81-176).